The following is a 247-amino-acid chain: Proteasome subunit alpha type-7-1 (247 aa).

It belongs to the peptidase T1A family. In terms of assembly, the 26S proteasome consists of a 20S proteasome core and two 19S regulatory subunits. The 20S proteasome core is composed of 28 subunits that are arranged in four stacked rings, resulting in a barrel-shaped structure. The two end rings are each formed by seven alpha subunits, and the two central rings are each formed by seven beta subunits. The catalytic chamber with the active sites is on the inside of the barrel.

Its subcellular location is the cytoplasm. The protein resides in the nucleus. In terms of biological role, the proteasome is a multicatalytic proteinase complex which is characterized by its ability to cleave peptides with Arg, Phe, Tyr, Leu, and Glu adjacent to the leaving group at neutral or slightly basic pH. The proteasome has an ATP-dependent proteolytic activity. This chain is Proteasome subunit alpha type-7-1 (Pros28.1), found in Drosophila virilis (Fruit fly).